Here is a 427-residue protein sequence, read N- to C-terminus: Dihydroorotase (427 aa).

Zn(2+) is bound by residues H60 and H62. Substrate contacts are provided by residues 62–64 (HLR) and N94. Residues D152, H179, and H232 each contribute to the Zn(2+) site. N278 is a binding site for substrate. D305 is a Zn(2+) binding site. Residue D305 is part of the active site. Residues H309 and 323 to 324 (FG) contribute to the substrate site.

It belongs to the metallo-dependent hydrolases superfamily. DHOase family. Class I DHOase subfamily. The cofactor is Zn(2+).

The catalysed reaction is (S)-dihydroorotate + H2O = N-carbamoyl-L-aspartate + H(+). The protein operates within pyrimidine metabolism; UMP biosynthesis via de novo pathway; (S)-dihydroorotate from bicarbonate: step 3/3. Its function is as follows. Catalyzes the reversible cyclization of carbamoyl aspartate to dihydroorotate. This Geobacillus sp. (strain WCH70) protein is Dihydroorotase.